A 251-amino-acid polypeptide reads, in one-letter code: Probable aquaporin TIP4-1 (251 aa).

A run of 2 helical transmembrane segments spans residues 26–46 (LVLT…AGVP) and 57–77 (ALAG…TAGF). Residues 85–87 (NPA) carry the NPA 1 motif. 3 helical membrane passes run 104–124 (ALYV…LRYL), 144–164 (GLVM…ATIL), and 170–190 (VPGF…IAGG). An NPA 2 motif is present at residues 198 to 200 (NPA). A helical transmembrane segment spans residues 219 to 239 (WLGPLIGGPLAGLVYESLFLV).

Belongs to the MIP/aquaporin (TC 1.A.8) family. TIP (TC 1.A.8.10) subfamily. As to expression, expressed in roots, leaves and anthers.

The protein resides in the vacuole membrane. Aquaporins facilitate the transport of water and small neutral solutes across cell membranes. May be involved in transport from the vacuolar compartment to the cytoplasm. The sequence is that of Probable aquaporin TIP4-1 (TIP4-1) from Oryza sativa subsp. japonica (Rice).